We begin with the raw amino-acid sequence, 453 residues long: Autophagy-related protein 21 (453 aa).

One copy of the WD 1 repeat lies at 4-137; sequence LRFNQDASCC…NDQIFIYDIS (134 aa). The tract at residues 177-207 is disordered; the sequence is GNELDRIRSKSNNNNDQTNSDNGRSRTYSIN. Over residues 187–198 the composition is skewed to low complexity; it reads SNNNNDQTNSDN. WD repeat units follow at residues 252–347 and 419–453; these read NLKP…RTDD and FDNK…SHFI. Positions 310–314 match the L/FRRG motif motif; sequence FRRGS.

The protein belongs to the WD repeat PROPPIN family.

The protein resides in the cytoplasm. It localises to the membrane. It is found in the vacuole membrane. Functionally, required for cytoplasm to vacuole transport (Cvt) vesicles formation and mitophagy. Involved in binding of phosphatidylethanolamine to ATG8 and in recruitment of ATG8 and ATG5 to the pre-autophagosomal structure. Protects ATG8 from ARG4-mediated cleavage. The chain is Autophagy-related protein 21 (ATG21) from Candida glabrata (strain ATCC 2001 / BCRC 20586 / JCM 3761 / NBRC 0622 / NRRL Y-65 / CBS 138) (Yeast).